The primary structure comprises 349 residues: Short-wave-sensitive opsin 1 (349 aa).

Residues 1–34 (MSKMPEEEEFYLFKNISSVGPWDGPQYHIAPVWA) lie on the Extracellular side of the membrane. An N-linked (GlcNAc...) asparagine glycan is attached at Asn-15. The chain crosses the membrane as a helical span at residues 35–59 (FQLQAAFMGIVFLAGLPLNSMVLVA). Over 60–71 (TVRYKKLRHPLN) the chain is Cytoplasmic. The helical transmembrane segment at 72 to 97 (YVLVNVSVGGFLLCIFSVLPVFVNSC) threads the bilayer. Over 98 to 111 (NGYFVFGRHVCALE) the chain is Extracellular. The cysteines at positions 108 and 185 are disulfide-linked. Residues 112-131 (GFLGTVAGLVTGWSLAFLAF) form a helical membrane-spanning segment. Residues 132–150 (ERYIVICKPFGNFRFSSKH) are Cytoplasmic-facing. Residues 151 to 174 (ALMVVLTTWTIGIGVSIPPFFGWS) traverse the membrane as a helical segment. Residues 175–200 (RYIAEGLQCSCGPDWYTVGTKYRSEY) lie on the Extracellular side of the membrane. A helical transmembrane segment spans residues 201-228 (YTWFLFIFCFIVPLSLICFSYAQLLRAL). At 229-250 (KAVAAQQQESATTQKAEREVSR) the chain is on the cytoplasmic side. The chain crosses the membrane as a helical span at residues 251–274 (MVVVMVGSFCVCYVPYAALAMYMV). The Extracellular portion of the chain corresponds to 275-282 (NNRNHGLD). Residues 283 to 307 (LRLVSIPAFFSKSSCIYNPIIYCFM) traverse the membrane as a helical segment. Lys-294 bears the N6-(retinylidene)lysine mark. Over 308–349 (NKQFRACIMEMVCGKAMTDESDISSSQKTEVSTVSSSQVGPN) the chain is Cytoplasmic.

The protein belongs to the G-protein coupled receptor 1 family. Opsin subfamily. Post-translationally, phosphorylated on some or all of the serine and threonine residues present in the C-terminal region.

It is found in the cell membrane. It localises to the photoreceptor inner segment. The protein localises to the cell projection. The protein resides in the cilium. Its subcellular location is the photoreceptor outer segment. It is found in the cytoplasm. It localises to the perinuclear region. Visual pigments are the light-absorbing molecules that mediate vision. They consist of an apoprotein, opsin, covalently linked to cis-retinal. Required for the maintenance of cone outer segment organization in the ventral retina, but not essential for the maintenance of functioning cone photoreceptors. Involved in ensuring correct abundance and localization of retinal membrane proteins. May increase spectral sensitivity in dim light. The polypeptide is Short-wave-sensitive opsin 1 (OPN1SW) (Saimiri boliviensis boliviensis (Bolivian squirrel monkey)).